Consider the following 353-residue polypeptide: Ribosomal RNA large subunit methyltransferase M (353 aa).

S-adenosyl-L-methionine-binding positions include Ser179, 212–215 (APGG), Asp231, Asp251, and Asp267. The Proton acceptor role is filled by Lys296.

This sequence belongs to the class I-like SAM-binding methyltransferase superfamily. RNA methyltransferase RlmE family. RlmM subfamily. In terms of assembly, monomer.

It is found in the cytoplasm. The catalysed reaction is cytidine(2498) in 23S rRNA + S-adenosyl-L-methionine = 2'-O-methylcytidine(2498) in 23S rRNA + S-adenosyl-L-homocysteine + H(+). Catalyzes the 2'-O-methylation at nucleotide C2498 in 23S rRNA. The polypeptide is Ribosomal RNA large subunit methyltransferase M (Laribacter hongkongensis (strain HLHK9)).